Here is a 504-residue protein sequence, read N- to C-terminus: ATP synthase subunit alpha (504 aa).

An ATP-binding site is contributed by 169–176; that stretch reads GDRQIGKT.

Belongs to the ATPase alpha/beta chains family. F-type ATPases have 2 components, CF(1) - the catalytic core - and CF(0) - the membrane proton channel. CF(1) has five subunits: alpha(3), beta(3), gamma(1), delta(1), epsilon(1). CF(0) has three main subunits: a(1), b(2) and c(9-12). The alpha and beta chains form an alternating ring which encloses part of the gamma chain. CF(1) is attached to CF(0) by a central stalk formed by the gamma and epsilon chains, while a peripheral stalk is formed by the delta and b chains.

It is found in the cell membrane. The enzyme catalyses ATP + H2O + 4 H(+)(in) = ADP + phosphate + 5 H(+)(out). In terms of biological role, produces ATP from ADP in the presence of a proton gradient across the membrane. The alpha chain is a regulatory subunit. This chain is ATP synthase subunit alpha, found in Syntrophomonas wolfei subsp. wolfei (strain DSM 2245B / Goettingen).